The following is a 620-amino-acid chain: MDSHTLIQALIYLGSAALIVPIAVRLGLGSVLGYLIAGCIIGPWGLRLVTDAESILHFAEIGVVLMLFIIGLELDPQRLWKLRAAVFGGGALQMVICGGLLGLFCMLLGLRWQVAELIGMTLALSSTAIAMQAMNERNLMVTQMGRSAFAVLLFQDIAAIPLVAMIPLLAASSASTTMGAFALSALKVAGALVLVVLLGRYVTRPALRFVARSGLREVFSAVALFLVFGFGLLLEEVGLSMAMGAFLAGVLLASSEYRHALESDIEPFKGLLLGLFFIGVGMSIDFGTLIENPLRIVILLLGFLIIKIAMLWLIARPLQVPNKQRRWFAVLLGQGSEFAFVVFGAAQMANVLEPEWAKSLTLAVALSMAATPILLVILNRLEQSSTEEAREADEIDEEQPRVIIAGFGRFGQITGRLLLSSGVKMVVLDHDPDHIETLRKFGMKVFYGDATRMDLLESAGAAKAEVLINAIDDPQTNLQLTEMVKEHFPHLQIIARARDVDHYIRLRQAGVEKPERETFEGALKTGRLALESLGLGPYEARERADVFRRFNIQMVEEMAMVENDTKARAAVYKRTSAMLSEIITEDREHLSLIQRHGWQGTEEGKHTGNMADEPETKPSS.

Transmembrane regions (helical) follow at residues 4–24, 26–46, 54–74, 90–110, 114–134, 149–169, 178–198, 218–238, 270–290, 294–314, 327–347, and 359–379; these read HTLIQALIYLGSAALIVPIAV, LGLGSVLGYLIAGCIIGPWGL, SILHFAEIGVVLMLFIIGLEL, GALQMVICGGLLGLFCMLLGL, VAELIGMTLALSSTAIAMQAM, FAVLLFQDIAAIPLVAMIPLL, MGAFALSALKVAGALVLVVLL, VFSAVALFLVFGFGLLLEEVG, GLLLGLFFIGVGMSIDFGTLI, LRIVILLLGFLIIKIAMLWLI, WFAVLLGQGSEFAFVVFGAAQ, and SLTLAVALSMAATPILLVILN. Positions 399-518 constitute an RCK N-terminal domain; the sequence is QPRVIIAGFG…AGVEKPERET (120 aa). The disordered stretch occupies residues 597–620; the sequence is GWQGTEEGKHTGNMADEPETKPSS.

This sequence belongs to the monovalent cation:proton antiporter 2 (CPA2) transporter (TC 2.A.37) family. KefC subfamily. As to quaternary structure, homodimer. Interacts with the regulatory subunit KefF.

It is found in the cell inner membrane. Its function is as follows. Pore-forming subunit of a potassium efflux system that confers protection against electrophiles. Catalyzes K(+)/H(+) antiport. The chain is Glutathione-regulated potassium-efflux system protein KefC from Escherichia coli (strain SMS-3-5 / SECEC).